Here is a 448-residue protein sequence, read N- to C-terminus: Homogentisate 1,2-dioxygenase (448 aa).

Histidine 302 serves as the catalytic Proton acceptor. Fe cation-binding residues include histidine 345 and glutamate 351. Positions 360 and 381 each coordinate homogentisate. Residue histidine 381 coordinates Fe cation.

The protein belongs to the homogentisate dioxygenase family. Hexamer; dimer of trimers. Fe cation is required as a cofactor.

It carries out the reaction homogentisate + O2 = 4-maleylacetoacetate + H(+). It functions in the pathway amino-acid degradation; L-phenylalanine degradation; acetoacetate and fumarate from L-phenylalanine: step 4/6. In terms of biological role, involved in the catabolism of homogentisate (2,5-dihydroxyphenylacetate or 2,5-OH-PhAc), a central intermediate in the degradation of phenylalanine and tyrosine. Catalyzes the oxidative ring cleavage of the aromatic ring of homogentisate to yield maleylacetoacetate. This Ralstonia pickettii (strain 12J) protein is Homogentisate 1,2-dioxygenase.